The chain runs to 543 residues: Chaperonin GroEL (543 aa).

Residues 29 to 32, Lys50, 86 to 90, Gly413, 480 to 482, and Asp496 contribute to the ATP site; these read TLGP, DGTTT, and NAA. A disordered region spans residues 524-543; that stretch reads EKPEKKESTPASAGAGDMDF.

The protein belongs to the chaperonin (HSP60) family. Forms a cylinder of 14 subunits composed of two heptameric rings stacked back-to-back. Interacts with the co-chaperonin GroES.

The protein resides in the cytoplasm. It carries out the reaction ATP + H2O + a folded polypeptide = ADP + phosphate + an unfolded polypeptide.. Its function is as follows. Together with its co-chaperonin GroES, plays an essential role in assisting protein folding. The GroEL-GroES system forms a nano-cage that allows encapsulation of the non-native substrate proteins and provides a physical environment optimized to promote and accelerate protein folding. The chain is Chaperonin GroEL from Thermus thermophilus (strain ATCC BAA-163 / DSM 7039 / HB27).